The chain runs to 61 residues: Protein translocase subunit SecE (61 aa).

Residues 38–58 (GIGMILIGTIGMIIRIIGYLV) traverse the membrane as a helical segment.

It belongs to the SecE/SEC61-gamma family. Component of the Sec protein translocase complex. Heterotrimer consisting of SecY (alpha), SecG (beta) and SecE (gamma) subunits. The heterotrimers can form oligomers, although 1 heterotrimer is thought to be able to translocate proteins. Interacts with the ribosome. May interact with SecDF, and other proteins may be involved.

Its subcellular location is the cell membrane. Essential subunit of the Sec protein translocation channel SecYEG. Clamps together the 2 halves of SecY. May contact the channel plug during translocation. In Thermococcus kodakarensis (strain ATCC BAA-918 / JCM 12380 / KOD1) (Pyrococcus kodakaraensis (strain KOD1)), this protein is Protein translocase subunit SecE.